We begin with the raw amino-acid sequence, 585 residues long: Glutamine--tRNA ligase (585 aa).

Residues 51–61 (PEPNGYLHIGH) carry the 'HIGH' region motif. Residues 52 to 54 (EPN) and 58 to 64 (HIGHAKS) each bind ATP. L-glutamine contacts are provided by Asp-84 and Tyr-238. ATP is bound by residues Thr-257 and 292–293 (RL). The 'KMSKS' region motif lies at 299-303 (ITSKR).

This sequence belongs to the class-I aminoacyl-tRNA synthetase family. In terms of assembly, monomer.

It is found in the cytoplasm. The catalysed reaction is tRNA(Gln) + L-glutamine + ATP = L-glutaminyl-tRNA(Gln) + AMP + diphosphate. The chain is Glutamine--tRNA ligase from Cupriavidus necator (strain ATCC 17699 / DSM 428 / KCTC 22496 / NCIMB 10442 / H16 / Stanier 337) (Ralstonia eutropha).